The chain runs to 191 residues: Protein Ves (191 aa).

It belongs to the Ves family.

This chain is Protein Ves, found in Shigella boydii serotype 18 (strain CDC 3083-94 / BS512).